Reading from the N-terminus, the 274-residue chain is 2,3,4,5-tetrahydropyridine-2,6-dicarboxylate N-succinyltransferase (274 aa).

Substrate contacts are provided by R107 and D144.

This sequence belongs to the transferase hexapeptide repeat family. Homotrimer.

The protein resides in the cytoplasm. The catalysed reaction is (S)-2,3,4,5-tetrahydrodipicolinate + succinyl-CoA + H2O = (S)-2-succinylamino-6-oxoheptanedioate + CoA. The protein operates within amino-acid biosynthesis; L-lysine biosynthesis via DAP pathway; LL-2,6-diaminopimelate from (S)-tetrahydrodipicolinate (succinylase route): step 1/3. In Cereibacter sphaeroides (strain ATCC 17025 / ATH 2.4.3) (Rhodobacter sphaeroides), this protein is 2,3,4,5-tetrahydropyridine-2,6-dicarboxylate N-succinyltransferase.